The sequence spans 301 residues: Glycine--tRNA ligase alpha subunit (301 aa).

The protein belongs to the class-II aminoacyl-tRNA synthetase family. In terms of assembly, tetramer of two alpha and two beta subunits.

The protein localises to the cytoplasm. It catalyses the reaction tRNA(Gly) + glycine + ATP = glycyl-tRNA(Gly) + AMP + diphosphate. This is Glycine--tRNA ligase alpha subunit from Campylobacter hominis (strain ATCC BAA-381 / DSM 21671 / CCUG 45161 / LMG 19568 / NCTC 13146 / CH001A).